A 647-amino-acid chain; its full sequence is MGKVIGIDLGTTNSCVAVMEGDKVKIIENAEGTRTTPSIVAYKDDEILVGQSAKRQAVTNPNNTLFAIKRLIGRRFDDKVVQKDIGMVPYKIAKADNGDAWVEINGKKLAPPQVSAEILKKMKKTAEDYLGEAVTEAVVTVPAYFNDSQRQATKDAGKIAGLDVKRIINEPTAAALAYGMDKKQGDSTVAVYDLGGGTFDVSIIEIADVDGEQQFEVLATNGDTFLGGEDFDSALIDFLVAEFKKDQDVNLKGDSLAMQRLKEAAEKAKIELSSAQSTEVNLPYITADSSGPKHLVVTISRSKLESLTEELVQRTMGPCKIALEDAGIKIGDIDDVILVGGQTRMPLVQQKVQEFFGQEPRKDVNPDEAVAAGAAIQGAVLSGEKTDVLLLDVTPLTLGIETMGGILTPIIEKNTMIPTKKSQVFSTAEDNQPAVSIQVYQGERKIANQNKQLGRFDLTDIPPAPRGLPQIEVSFDINADGIMNISATDKGTGKAQSIQIKADSGLSDEEVEQMIRDAEANAAEDEKFANLAQVRNEADGRIHAVQKALKDAADKVSDDEKSSVEAAISELEAAAKEDDHEEIKAKLEALDNAFLPVSQKIYADAGASAEGMDPNQFQQGADNAGESNQADDDVVDAEFTEVEDDKK.

The residue at position 198 (T198) is a Phosphothreonine; by autocatalysis. The interval 606–634 (GASAEGMDPNQFQQGADNAGESNQADDDV) is disordered. Positions 615–628 (NQFQQGADNAGESN) are enriched in polar residues.

This sequence belongs to the heat shock protein 70 family.

In terms of biological role, acts as a chaperone. This is Chaperone protein DnaK from Psychrobacter cryohalolentis (strain ATCC BAA-1226 / DSM 17306 / VKM B-2378 / K5).